A 238-amino-acid chain; its full sequence is Endonuclease V (238 aa).

2 residues coordinate Mg(2+): Asp46 and Asp116.

The protein belongs to the endonuclease V family. Requires Mg(2+) as cofactor.

It is found in the cytoplasm. The enzyme catalyses Endonucleolytic cleavage at apurinic or apyrimidinic sites to products with a 5'-phosphate.. Its function is as follows. DNA repair enzyme involved in the repair of deaminated bases. Selectively cleaves double-stranded DNA at the second phosphodiester bond 3' to a deoxyinosine leaving behind the intact lesion on the nicked DNA. The protein is Endonuclease V of Bacillus velezensis (strain DSM 23117 / BGSC 10A6 / LMG 26770 / FZB42) (Bacillus amyloliquefaciens subsp. plantarum).